Reading from the N-terminus, the 418-residue chain is UPF0261 protein BMEII0128 (418 aa).

This sequence belongs to the UPF0261 family.

The chain is UPF0261 protein BMEII0128 from Brucella melitensis biotype 1 (strain ATCC 23456 / CCUG 17765 / NCTC 10094 / 16M).